A 345-amino-acid chain; its full sequence is N-acetyl-gamma-glutamyl-phosphate reductase (345 aa).

Residue Cys-149 is part of the active site.

It belongs to the NAGSA dehydrogenase family. Type 1 subfamily.

It localises to the cytoplasm. The catalysed reaction is N-acetyl-L-glutamate 5-semialdehyde + phosphate + NADP(+) = N-acetyl-L-glutamyl 5-phosphate + NADPH + H(+). Its pathway is amino-acid biosynthesis; L-arginine biosynthesis; N(2)-acetyl-L-ornithine from L-glutamate: step 3/4. In terms of biological role, catalyzes the NADPH-dependent reduction of N-acetyl-5-glutamyl phosphate to yield N-acetyl-L-glutamate 5-semialdehyde. The sequence is that of N-acetyl-gamma-glutamyl-phosphate reductase from Bacillus cereus (strain ATCC 10987 / NRS 248).